We begin with the raw amino-acid sequence, 127 residues long: Modulator protein MzrA (127 aa).

The Cytoplasmic portion of the chain corresponds to 1 to 9 (MQLPRVTLR). A helical membrane pass occupies residues 10 to 32 (QMTWTTSAIVLLGITLLLWSAFR). Residues 33–127 (HQESTLAIRA…LLRDTSHRFG (95 aa)) are Periplasmic-facing.

This sequence belongs to the MzrA family. Interacts with EnvZ.

It localises to the cell inner membrane. In terms of biological role, modulates the activity of the EnvZ/OmpR two-component regulatory system, probably by directly modulating EnvZ enzymatic activity and increasing stability of phosphorylated OmpR. The chain is Modulator protein MzrA from Escherichia fergusonii (strain ATCC 35469 / DSM 13698 / CCUG 18766 / IAM 14443 / JCM 21226 / LMG 7866 / NBRC 102419 / NCTC 12128 / CDC 0568-73).